A 334-amino-acid chain; its full sequence is MEERYEALKELGAGNFGVARLVRDKRSKELVAVKYIERGKKIDENVQREIINHRSLRHPNIIRFKEVCLTPTHLAIVMEYAAGGELFEQICTAGRFSEDEARYFFQQLISGVSYCHSLEICHRDLKLENTLLDGSPTPRVKICDFGYSKSALLHSKPKSTVGTPAYIAPEVLSRKEYDGKVADVWSCGVTLYVMLVGSYPFEDPGDPRNFRKTISRILGVQYSIPDYVRVSSDCRRLLSQIFVADPSKRITIPEIKKHTWFLKNLPKEISEREKADYKDTDAAPPTQAVEEIMRIIQEAKVPGDMAAADPALLAELAELKSDDEEEAADEYDTY.

Residues tyrosine 5–phenylalanine 261 form the Protein kinase domain. ATP contacts are provided by residues leucine 11–alanine 19 and lysine 34. Aspartate 124 (proton acceptor) is an active-site residue.

Belongs to the protein kinase superfamily. Ser/Thr protein kinase family. Post-translationally, autophosphorylated in presence of Ca(2+). Expressed in leaves and maturing seeds, but not in roots and stems of field-grown plants.

The protein resides in the cytoplasm. Its subcellular location is the nucleus. It catalyses the reaction L-seryl-[protein] + ATP = O-phospho-L-seryl-[protein] + ADP + H(+). The enzyme catalyses L-threonyl-[protein] + ATP = O-phospho-L-threonyl-[protein] + ADP + H(+). With respect to regulation, activated by phosphorylation. May play a role in signal transduction of hyperosmotic response. The sequence is that of Serine/threonine-protein kinase SAPK3 (SAPK3) from Oryza sativa subsp. indica (Rice).